We begin with the raw amino-acid sequence, 429 residues long: MKLLYLQTLGCAMNVRDSEHIVAELKDEYKLTDDISKADLILINTCSVREKPVHKLFSEIGAFNKVRKNGSKIGVCGCTASHLGEEIFNKAPFVDFVLGARNVSKISEAVKTPKFISTDINYDESEFAFGEFRGSPYKAFVNIMIGCDKKCSYCIVPQTRGKEISIPAEIILNEASKAVQNGAKEIFLLGQNVNNYGKFFSSRHEKMDFSDLLVKISEIKGVERIRFTSPHPLHMDDKFLDIFTSNPKICKSMHMPLQSGSTKVLRDMRRGYDKEWFLNRALRLRKMCPEVSISTDIIVAYPTESEDDFKDTMEVLNEVKFEQIFSFKFSPRPLTAAENLPLIDNEIASKRLEILQSRHNEILDEIMKNQVGKIFDVYFEELRANGEVAGRSFSNFLVSVKGSEDLLGKILPVRIEKASRMVLYGKITA.

Residues 2-115 (KLLYLQTLGC…ISEAVKTPKF (114 aa)) enclose the MTTase N-terminal domain. [4Fe-4S] cluster-binding residues include C11, C46, C78, C147, C151, and C154. Residues 133–365 (RGSPYKAFVN…QSRHNEILDE (233 aa)) enclose the Radical SAM core domain. The TRAM domain maps to 368–429 (KNQVGKIFDV…RMVLYGKITA (62 aa)).

It belongs to the methylthiotransferase family. MiaB subfamily. As to quaternary structure, monomer. Requires [4Fe-4S] cluster as cofactor.

It is found in the cytoplasm. It catalyses the reaction N(6)-dimethylallyladenosine(37) in tRNA + (sulfur carrier)-SH + AH2 + 2 S-adenosyl-L-methionine = 2-methylsulfanyl-N(6)-dimethylallyladenosine(37) in tRNA + (sulfur carrier)-H + 5'-deoxyadenosine + L-methionine + A + S-adenosyl-L-homocysteine + 2 H(+). Catalyzes the methylthiolation of N6-(dimethylallyl)adenosine (i(6)A), leading to the formation of 2-methylthio-N6-(dimethylallyl)adenosine (ms(2)i(6)A) at position 37 in tRNAs that read codons beginning with uridine. The polypeptide is tRNA-2-methylthio-N(6)-dimethylallyladenosine synthase (Campylobacter hominis (strain ATCC BAA-381 / DSM 21671 / CCUG 45161 / LMG 19568 / NCTC 13146 / CH001A)).